The chain runs to 341 residues: Glycerol-3-phosphate dehydrogenase [NAD(P)+] (341 aa).

NADPH is bound by residues Ser14, Phe15, Arg35, and Lys108. Residues Lys108 and Gly136 each contribute to the sn-glycerol 3-phosphate site. Ala140 is a binding site for NADPH. The sn-glycerol 3-phosphate site is built by Lys191, Asp244, Ser254, Arg255, and Asn256. Lys191 functions as the Proton acceptor in the catalytic mechanism. Arg255 contacts NADPH. NADPH-binding residues include Val279 and Glu281.

The protein belongs to the NAD-dependent glycerol-3-phosphate dehydrogenase family.

It is found in the cytoplasm. It carries out the reaction sn-glycerol 3-phosphate + NAD(+) = dihydroxyacetone phosphate + NADH + H(+). It catalyses the reaction sn-glycerol 3-phosphate + NADP(+) = dihydroxyacetone phosphate + NADPH + H(+). The protein operates within membrane lipid metabolism; glycerophospholipid metabolism. Its function is as follows. Catalyzes the reduction of the glycolytic intermediate dihydroxyacetone phosphate (DHAP) to sn-glycerol 3-phosphate (G3P), the key precursor for phospholipid synthesis. The chain is Glycerol-3-phosphate dehydrogenase [NAD(P)+] from Pseudomonas syringae pv. tomato (strain ATCC BAA-871 / DC3000).